A 261-amino-acid polypeptide reads, in one-letter code: 5'-nucleotidase SurE (261 aa).

Positions 8, 9, 40, and 94 each coordinate a divalent metal cation.

Belongs to the SurE nucleotidase family. A divalent metal cation is required as a cofactor.

It localises to the cytoplasm. It catalyses the reaction a ribonucleoside 5'-phosphate + H2O = a ribonucleoside + phosphate. Nucleotidase that shows phosphatase activity on nucleoside 5'-monophosphates. In Anaplasma marginale (strain Florida), this protein is 5'-nucleotidase SurE.